The primary structure comprises 460 residues: Cysteine--tRNA ligase (460 aa).

A Zn(2+)-binding site is contributed by Cys28. Positions 30 to 40 (MTVYDYCHLGH) match the 'HIGH' region motif. Zn(2+) is bound by residues Cys209, His234, and Glu238. The 'KMSKS' region motif lies at 266–270 (KMSKS). ATP is bound at residue Lys269.

The protein belongs to the class-I aminoacyl-tRNA synthetase family. As to quaternary structure, monomer. Zn(2+) serves as cofactor.

The protein localises to the cytoplasm. It catalyses the reaction tRNA(Cys) + L-cysteine + ATP = L-cysteinyl-tRNA(Cys) + AMP + diphosphate. The sequence is that of Cysteine--tRNA ligase from Pseudomonas fluorescens (strain Pf0-1).